Reading from the N-terminus, the 396-residue chain is Digeranylgeranylglycerophospholipid reductase (396 aa).

The FAD site is built by Gly14, Glu33, Cys44, Gly45, Gly47, Arg100, Ala124, Glu162, Asp283, Gly295, and Ile296. A 2,3-bis-O-(geranylgeranyl)-sn-glycerol 1-phospholipid-binding residues include Lys338 and Val374.

The protein belongs to the geranylgeranyl reductase family. DGGGPL reductase subfamily. Monomer. It depends on FAD as a cofactor.

It is found in the cell membrane. The catalysed reaction is 2,3-bis-O-(phytanyl)-sn-glycerol 1-phosphate + 8 NADP(+) = 2,3-bis-O-(geranylgeranyl)-sn-glycerol 1-phosphate + 8 NADPH + 8 H(+). It catalyses the reaction 2,3-bis-O-(phytanyl)-sn-glycerol 1-phosphate + 8 NAD(+) = 2,3-bis-O-(geranylgeranyl)-sn-glycerol 1-phosphate + 8 NADH + 8 H(+). The enzyme catalyses a 2,3-bis-O-phytanyl-sn-glycerol 1-phospholipid + 8 A = a 2,3-bis-O-(geranylgeranyl)-sn-glycerol 1-phospholipid + 8 AH2. It carries out the reaction CDP-2,3-bis-O-(geranylgeranyl)-sn-glycerol + 8 AH2 = CDP-2,3-bis-O-(phytanyl)-sn-glycerol + 8 A. The catalysed reaction is archaetidylserine + 8 AH2 = 2,3-bis-O-phytanyl-sn-glycero-3-phospho-L-serine + 8 A. The protein operates within membrane lipid metabolism; glycerophospholipid metabolism. Functionally, is involved in the reduction of 2,3-digeranylgeranylglycerophospholipids (unsaturated archaeols) into 2,3-diphytanylglycerophospholipids (saturated archaeols) in the biosynthesis of archaeal membrane lipids. Catalyzes the formation of archaetidic acid (2,3-di-O-phytanyl-sn-glyceryl phosphate) from 2,3-di-O-geranylgeranylglyceryl phosphate (DGGGP) via the hydrogenation of each double bond of the isoprenoid chains. Can use both NADH and NADPH as electron donors. Also catalyzes the reduction of 2,3-di-O-geranylgeranylglyceryl phosphate analogs such as 2,3-di-O-phytyl-sn-glyceryl phosphate (DPHGP), 3-O-(2,3-di-O-phytyl-sn-glycero-phospho)-sn-glycerol (DPHGPG) and 2,3-di-O-phytyl-sn-glycero-phosphoethanolamine (DPHGPE). Is not active toward 2,3-di-O-geranylgeranylglycerol. Is also probably able to reduce double bonds of geranyl groups in CDP-2,3-bis-O-(geranylgeranyl)-sn-glycerol and archaetidylserine, thus acting at various stages in the biosynthesis of archaeal membrane lipids. This Thermoplasma acidophilum (strain ATCC 25905 / DSM 1728 / JCM 9062 / NBRC 15155 / AMRC-C165) protein is Digeranylgeranylglycerophospholipid reductase.